We begin with the raw amino-acid sequence, 394 residues long: Elongation factor Tu (394 aa).

Residues K10–E204 enclose the tr-type G domain. The G1 stretch occupies residues G19–T26. Residue G19–T26 participates in GTP binding. T26 provides a ligand contact to Mg(2+). Residues G60–S64 are G2. Residues D81–G84 are G3. Residues D81 to H85 and N136 to D139 each bind GTP. Residues N136–D139 are G4. The segment at S174–V176 is G5.

It belongs to the TRAFAC class translation factor GTPase superfamily. Classic translation factor GTPase family. EF-Tu/EF-1A subfamily. As to quaternary structure, monomer.

It is found in the cytoplasm. It carries out the reaction GTP + H2O = GDP + phosphate + H(+). Functionally, GTP hydrolase that promotes the GTP-dependent binding of aminoacyl-tRNA to the A-site of ribosomes during protein biosynthesis. In Akkermansia muciniphila (strain ATCC BAA-835 / DSM 22959 / JCM 33894 / BCRC 81048 / CCUG 64013 / CIP 107961 / Muc), this protein is Elongation factor Tu.